We begin with the raw amino-acid sequence, 513 residues long: 2,3-bisphosphoglycerate-independent phosphoglycerate mutase (513 aa).

Residues aspartate 13 and serine 63 each contribute to the Mn(2+) site. The Phosphoserine intermediate role is filled by serine 63. Substrate-binding positions include histidine 124, 154 to 155 (RD), arginine 186, arginine 192, 262 to 265 (RADR), and lysine 335. Residues aspartate 402, histidine 406, aspartate 443, histidine 444, and histidine 462 each contribute to the Mn(2+) site.

It belongs to the BPG-independent phosphoglycerate mutase family. In terms of assembly, monomer. It depends on Mn(2+) as a cofactor.

It carries out the reaction (2R)-2-phosphoglycerate = (2R)-3-phosphoglycerate. It functions in the pathway carbohydrate degradation; glycolysis; pyruvate from D-glyceraldehyde 3-phosphate: step 3/5. In terms of biological role, catalyzes the interconversion of 2-phosphoglycerate and 3-phosphoglycerate. This is 2,3-bisphosphoglycerate-independent phosphoglycerate mutase from Shewanella amazonensis (strain ATCC BAA-1098 / SB2B).